The chain runs to 235 residues: Serine protease SplA (235 aa).

The signal sequence occupies residues 1–35; that stretch reads MNKNVMVKGLTALDILTSLGCAENISDQPHSIAKA. Active-site charge relay system residues include histidine 74, aspartate 113, and serine 189.

It belongs to the peptidase S1B family.

The protein resides in the secreted. The chain is Serine protease SplA (splA) from Staphylococcus aureus.